Here is a 392-residue protein sequence, read N- to C-terminus: Succinate--CoA ligase [ADP-forming] subunit beta (392 aa).

In terms of domain architecture, ATP-grasp spans 9 to 248 (KDILRKFGVA…TNEEDPFEVE (240 aa)). ATP contacts are provided by residues Lys50, 57–59 (GRG), Glu103, Met106, and Glu111. Mg(2+) is bound by residues Asn203 and Asp217. Residues Asn268 and 325-327 (GIV) contribute to the substrate site.

Belongs to the succinate/malate CoA ligase beta subunit family. As to quaternary structure, heterotetramer of two alpha and two beta subunits. Mg(2+) serves as cofactor.

The catalysed reaction is succinate + ATP + CoA = succinyl-CoA + ADP + phosphate. It carries out the reaction GTP + succinate + CoA = succinyl-CoA + GDP + phosphate. The protein operates within carbohydrate metabolism; tricarboxylic acid cycle; succinate from succinyl-CoA (ligase route): step 1/1. Its function is as follows. Succinyl-CoA synthetase functions in the citric acid cycle (TCA), coupling the hydrolysis of succinyl-CoA to the synthesis of either ATP or GTP and thus represents the only step of substrate-level phosphorylation in the TCA. The beta subunit provides nucleotide specificity of the enzyme and binds the substrate succinate, while the binding sites for coenzyme A and phosphate are found in the alpha subunit. In Pelodictyon phaeoclathratiforme (strain DSM 5477 / BU-1), this protein is Succinate--CoA ligase [ADP-forming] subunit beta.